A 382-amino-acid chain; its full sequence is Prostaglandin D2 receptor 2 (382 aa).

Residues methionine 1–histidine 32 lie on the Extracellular side of the membrane. N-linked (GlcNAc...) asparagine glycosylation is found at asparagine 3, asparagine 21, and asparagine 24. A helical membrane pass occupies residues valine 33–valine 55. Residues valine 56 to threonine 66 are Cytoplasmic-facing. Residues threonine 67 to tyrosine 88 traverse the membrane as a helical segment. Over phenylalanine 89 to leucine 105 the chain is Extracellular. Cysteine 103 and cysteine 181 are joined by a disulfide. Residues histidine 106–leucine 126 form a helical membrane-spanning segment. Residues aspartate 127–alanine 145 lie on the Cytoplasmic side of the membrane. A helical transmembrane segment spans residues valine 146–valine 167. The Extracellular portion of the chain corresponds to phenylalanine 168 to lysine 209. A helical transmembrane segment spans residues phenylalanine 210–leucine 230. The Cytoplasmic segment spans residues arginine 231–leucine 246. Residues valine 247–glutamate 268 form a helical membrane-spanning segment. Topologically, residues alanine 269–phenylalanine 287 are extracellular. The helical transmembrane segment at valine 288 to cysteine 307 threads the bilayer. The Cytoplasmic portion of the chain corresponds to proline 308–aspartate 357. An Involved in the recycling of CRTH2 motif is present at residues aspartate 329 to glutamine 332. Phosphoserine is present on residues serine 330 and serine 344.

The protein belongs to the G-protein coupled receptor 1 family. Phosphorylated.

It localises to the cell membrane. In terms of biological role, receptor for prostaglandin D2 (PGD2). Coupled to the G(i)-protein. Receptor activation may result in pertussis toxin-sensitive decreases in cAMP levels and Ca(2+) mobilization. PI3K signaling is also implicated in mediating PTGDR2 effects. PGD2 induced receptor internalization. CRTH2 internalization can be regulated by diverse kinases such as, PKC, PKA, GRK2, GPRK5/GRK5 and GRK6. Receptor activation is responsible, at least in part, in immune regulation and allergic/inflammation responses. This chain is Prostaglandin D2 receptor 2 (Ptgdr2), found in Mus musculus (Mouse).